A 355-amino-acid polypeptide reads, in one-letter code: D-alanine--D-alanine ligase (355 aa).

Residues 143–350 form the ATP-grasp domain; sequence KTIFSNHKLP…IEQLVAKLVD (208 aa). 178–233 is an ATP binding site; it reads LKKLKFPVFVKPSNSGSSLGISKVKNESEILLALEKAWGIDPRILIEEGLEVREIE. Mg(2+) contacts are provided by D303, E317, and N319.

The protein belongs to the D-alanine--D-alanine ligase family. Mg(2+) serves as cofactor. It depends on Mn(2+) as a cofactor.

It is found in the cytoplasm. The catalysed reaction is 2 D-alanine + ATP = D-alanyl-D-alanine + ADP + phosphate + H(+). The protein operates within cell wall biogenesis; peptidoglycan biosynthesis. Its function is as follows. Cell wall formation. The protein is D-alanine--D-alanine ligase of Prochlorococcus marinus (strain MIT 9301).